The following is a 423-amino-acid chain: Probable sucrose-phosphatase 1 (423 aa).

The protein belongs to the sucrose phosphatase family. As to quaternary structure, homodimer. It depends on Mg(2+) as a cofactor.

The enzyme catalyses sucrose 6(F)-phosphate + H2O = sucrose + phosphate. The protein operates within glycan biosynthesis; sucrose biosynthesis; sucrose from D-fructose 6-phosphate and UDP-alpha-D-glucose: step 2/2. In terms of biological role, catalyzes the final step of sucrose synthesis. This chain is Probable sucrose-phosphatase 1 (SPP1), found in Arabidopsis thaliana (Mouse-ear cress).